The sequence spans 431 residues: Keratin, type I cytoskeletal 20 (431 aa).

Residues methionine 1–methionine 23 form a disordered region. A head region spans residues methionine 1–asparagine 76. At serine 13 the chain carries Phosphoserine; by MAPKAPK2, MAPKAPK3 and PKC. Phosphoserine occurs at positions 16 and 26. Positions glycine 77–tryptophan 112 are coil 1A. Residues glycine 77 to threonine 388 enclose the IF rod domain. The interval tyrosine 113–glutamine 130 is linker 1. Residues isoleucine 131 to leucine 222 form a coil 1B region. The segment at arginine 223 to isoleucine 245 is linker 12. Residues methionine 246–glutamate 384 are coil 2. The tail stretch occupies residues aspartate 385–valine 431.

Belongs to the intermediate filament family. In terms of assembly, heterotetramer of two type I and two type II keratins. Associates with KRT8. Hyperphosphorylation at Ser-13 occurs during the early stages of apoptosis but becomes less prominent during the later stages. Phosphorylation at Ser-13 also increases in response to stress brought on by cell injury. Post-translationally, proteolytically cleaved by caspases during apoptosis. Cleavage occurs at Asp-235. As to expression, expressed at low levels in the more differentiated suprabasal regions of the small intestine, and at higher levels in the colon, mainly in the upper region and in scattered cells throughout the remaining epithelium. Also expressed in epithelial cells of bladder, ileum and stomach and at lower levels in pancreas and earskin. The phosphorylated form is nearly exclusively expressed in goblet cells of the small intestine and in the lumen-proximal cells of the colon (at protein level). Also expressed in jejunum and duodenum.

Plays a significant role in maintaining keratin filament organization in intestinal epithelia. When phosphorylated, plays a role in the secretion of mucin in the small intestine. The polypeptide is Keratin, type I cytoskeletal 20 (Mus musculus (Mouse)).